Reading from the N-terminus, the 1168-residue chain is MLSTVHKAGRAPALLRHGRRVPVQASQLRALTSGAQNTSIFQTQANAAQRLSSQKRWLSASAAAAAASQPAPDAKAYIQSGVVKPRDHVDVKKVLVIGSGGLAIGQAGEFDYSGSQALKALKEAGVASVLINPNIATIQTNHSLADEVYYLPVTPEYVEYVIQREKPDGIFLSFGGQTALNLGVQMQKLGLFEKYGVKVLGTSVRTLELSEDRDLFAKALEEINIPIAKSFAVNTVDEALDAANKIGYPIIVRAAYALGGLGSGFANNEEELRNMAARSLTLSPQILVEKSLKGWKEVEYEVVRDANNNCITVCNMENFDPLGIHTGDSIVVAPSQTLSDEEYHMLRSAAIKIVRHLGVVGECNVQYALQPDGLDYRVIEVNARLSRSSALASKATGYPLAYTAAKIGLGHSLPELPNAVTKTTTANFEPSLDYIVTKIPRWDLSKFQHVKRDIGSAMKSVGEVMAIGRTFEESFQKAIRQVDPRFVGFQGDKFEDLDFELQNPTDRRWLAVGQAMLHENYSVDRVHELSKIDKWFLYKLQNIVDCQKEMQQLGSLEALKKEHILKAKKLGFSDKQIAMAVNSTEDLVRAARKGFGIRPWVKKIDTLAAEFPADTNYLYTTYNASSHDVTFEDKGTVILGSGVYRIGSSVEFDWCAVSATQALRAMGEKTVMINYNPETYSTDFDTADKLYFEELSYERVMDIYELESASGVVVSVGGQLPQNIALRLQETGKARVLGTDPRDIDRAEDRQKFSEILDSIGVDQPAWKELTSVEEAEKFAEEVGYPVLVRPSYVLSGAAMTVIRSKEDLKDKLEAAANVSPEHPVVITKFIEGAQEIDVDGVASEGNLILHAVSEHVEQAGVHSGDATLVLPPANLDQTTMDRVKEIAQKVAKAWRITGPFNMQIIKAEDPEGGLPALKVIECNLRASRSFPFVSKVLGVNFIDAATKALVGKNVPEPTDLMAVKRDYLATKVPQFSWTRLAGADPFLGVEMASTGEMACFGKDLVDAYWASLQSAMNFRVPEPGEGLLFGGDLSKSWLTTIVDYLSPLGYKLYAADNEVKQFLESSAKTKIDVEVIAFPTNDKRALREVFAKNNIRGVFNLAQARGKTVFDVDYVMRRNAVDFGVPLFMEPQTAMLFAQCMAEKLPRPEGIPSEVRRWSEFIGGKPL.

Residues Met-1–Leu-51 constitute a mitochondrion transit peptide. Positions Arg-86–Asp-483 are carboxyphosphate synthetic domain. Residues Arg-213, Ala-243–Val-298, Arg-253, Gly-259, Gly-260, Lys-290, Leu-292, Glu-297, Gly-323, Ile-324, His-325, Gln-366, and Glu-380 each bind ATP. Positions Ala-217 to Leu-409 constitute an ATP-grasp 1 domain. Mg(2+)-binding residues include Gln-366, Glu-380, and Asn-382. The Mn(2+) site is built by Gln-366, Glu-380, and Asn-382. The interval Pro-484–Asp-628 is oligomerization domain. Residues Val-629–Met-1017 form a carbamoyl phosphate synthetic domain region. One can recognise an ATP-grasp 2 domain in the interval Ser-754–Val-951. Residues Ala-780–Ile-837, Arg-790, Lys-829, Ile-831, Glu-836, Gly-861, Val-862, His-863, Ser-864, Gln-904, and Glu-922 each bind ATP. Mg(2+) is bound by residues Gln-904, Glu-922, and Asn-924. Mn(2+) contacts are provided by Gln-904, Glu-922, and Asn-924. Positions Asn-1018–Ile-1152 are allosteric domain. An MGS-like domain is found at Phe-1019 to Leu-1168.

The protein belongs to the CarB family. As to quaternary structure, heterodimer composed of 2 chains; the small (or glutamine) chain promotes the hydrolysis of glutamine to ammonia, which is used by the large (or ammonia) chain to synthesize carbamoyl phosphate. Mg(2+) is required as a cofactor. Mn(2+) serves as cofactor.

The protein localises to the mitochondrion matrix. The catalysed reaction is hydrogencarbonate + L-glutamine + 2 ATP + H2O = carbamoyl phosphate + L-glutamate + 2 ADP + phosphate + 2 H(+). The enzyme catalyses hydrogencarbonate + NH4(+) + 2 ATP = carbamoyl phosphate + 2 ADP + phosphate + 2 H(+). The protein operates within amino-acid biosynthesis; L-arginine biosynthesis; carbamoyl phosphate from bicarbonate: step 1/1. Large subunit of the arginine-specific carbamoyl phosphate synthase (CPSase). CPSase catalyzes the formation of carbamoyl phosphate from the ammonia moiety of glutamine, hydrogencarbonate, and phosphate donated by ATP, the first step of the arginine biosynthetic pathway. The large subunit (synthetase) binds the substrates ammonia (free or transferred from glutamine from the small subunit), hydrogencarbonate and ATP and carries out an ATP-coupled ligase reaction, activating hydrogencarbonate by forming carboxy phosphate which reacts with ammonia to form carbamoyl phosphate. This chain is Carbamoyl phosphate synthase arginine-specific large chain, mitochondrial (arg-3), found in Neurospora crassa (strain ATCC 24698 / 74-OR23-1A / CBS 708.71 / DSM 1257 / FGSC 987).